The chain runs to 38 residues: Large ribosomal subunit protein bL36 (38 aa).

Belongs to the bacterial ribosomal protein bL36 family.

This chain is Large ribosomal subunit protein bL36, found in Saccharophagus degradans (strain 2-40 / ATCC 43961 / DSM 17024).